The primary structure comprises 74 residues: SPbeta prophage-derived uncharacterized HTH-type transcriptional regulator YopS (74 aa).

Residues 11-66 enclose the HTH cro/C1-type domain; it reads IPELCRKKDITINELSEITGIKKQQLSDYNRLVKVDMSIRTAKRIAAALDCNVEDL. Positions 22–41 form a DNA-binding region, H-T-H motif; it reads INELSEITGIKKQQLSDYNR.

The chain is SPbeta prophage-derived uncharacterized HTH-type transcriptional regulator YopS (yopS) from Bacillus subtilis (strain 168).